The primary structure comprises 313 residues: Antiviral protein I (313 aa).

The signal sequence occupies residues methionine 1–alanine 22. 2 disulfides stabilise this stretch: cysteine 56–cysteine 281 and cysteine 107–cysteine 128. The active site involves tyrosine 94. Valine 95 serves as a coordination point for substrate. Serine 143 lines the substrate pocket. The active site involves tyrosine 145. Serine 197 serves as a coordination point for substrate. Residues glutamate 198 and arginine 201 contribute to the active site. Arginine 201 serves as a coordination point for substrate. A propeptide spanning residues asparagine 286–phenylalanine 313 is cleaved from the precursor.

This sequence belongs to the ribosome-inactivating protein family. Type 1 RIP subfamily. In terms of assembly, monomer. Expressed in spring leaves (at protein level). Expressed in roots (at protein level).

The enzyme catalyses Endohydrolysis of the N-glycosidic bond at one specific adenosine on the 28S rRNA.. Functionally, possesses antiviral potency. Inhibits viral infection of plants (tobacco mosaic virus). Inhibits protein synthesis. Releases both adenine and guanine from Escherichia coli rRNA in vitro. Activity on guanine is 20 times slower than that on adenine. The sequence is that of Antiviral protein I (PAP1) from Phytolacca americana (American pokeweed).